Consider the following 76-residue polypeptide: Small ribosomal subunit protein bS18 (76 aa).

It belongs to the bacterial ribosomal protein bS18 family. In terms of assembly, part of the 30S ribosomal subunit. Forms a tight heterodimer with protein bS6.

Its function is as follows. Binds as a heterodimer with protein bS6 to the central domain of the 16S rRNA, where it helps stabilize the platform of the 30S subunit. The sequence is that of Small ribosomal subunit protein bS18 from Xanthomonas euvesicatoria pv. vesicatoria (strain 85-10) (Xanthomonas campestris pv. vesicatoria).